The chain runs to 61 residues: Small ribosomal subunit protein uS14 (61 aa).

Positions 24, 27, 40, and 43 each coordinate Zn(2+).

Belongs to the universal ribosomal protein uS14 family. Zinc-binding uS14 subfamily. As to quaternary structure, part of the 30S ribosomal subunit. Contacts proteins S3 and S10. Zn(2+) is required as a cofactor.

Its function is as follows. Binds 16S rRNA, required for the assembly of 30S particles and may also be responsible for determining the conformation of the 16S rRNA at the A site. The chain is Small ribosomal subunit protein uS14 from Mycoplasma capricolum subsp. capricolum (strain California kid / ATCC 27343 / NCTC 10154).